Here is a 650-residue protein sequence, read N- to C-terminus: Acetyl-coenzyme A synthetase (650 aa).

Residues 191–194 (RGGR), T311, and N335 each bind CoA. ATP contacts are provided by residues 387 to 389 (GEP), 411 to 416 (DTWWQT), D500, and R515. S523 contacts CoA. Position 526 (R526) interacts with ATP. The Mg(2+) site is built by V537, H539, and V542. Residue R584 participates in CoA binding. K609 carries the post-translational modification N6-acetyllysine.

Belongs to the ATP-dependent AMP-binding enzyme family. Mg(2+) serves as cofactor. Acetylated. Deacetylation by the SIR2-homolog deacetylase activates the enzyme.

It catalyses the reaction acetate + ATP + CoA = acetyl-CoA + AMP + diphosphate. Catalyzes the conversion of acetate into acetyl-CoA (AcCoA), an essential intermediate at the junction of anabolic and catabolic pathways. AcsA undergoes a two-step reaction. In the first half reaction, AcsA combines acetate with ATP to form acetyl-adenylate (AcAMP) intermediate. In the second half reaction, it can then transfer the acetyl group from AcAMP to the sulfhydryl group of CoA, forming the product AcCoA. In Shewanella sp. (strain MR-4), this protein is Acetyl-coenzyme A synthetase.